A 197-amino-acid polypeptide reads, in one-letter code: Adenylate kinase (197 aa).

Residue 7-15 (ALPGSGKTT) participates in ATP binding.

It belongs to the archaeal adenylate kinase family.

It is found in the cytoplasm. The enzyme catalyses AMP + ATP = 2 ADP. This Pyrobaculum aerophilum (strain ATCC 51768 / DSM 7523 / JCM 9630 / CIP 104966 / NBRC 100827 / IM2) protein is Adenylate kinase (adkA).